The sequence spans 104 residues: Small ribosomal subunit protein uS10 (104 aa).

The protein belongs to the universal ribosomal protein uS10 family. Part of the 30S ribosomal subunit.

Its function is as follows. Involved in the binding of tRNA to the ribosomes. The sequence is that of Small ribosomal subunit protein uS10 from Ruegeria pomeroyi (strain ATCC 700808 / DSM 15171 / DSS-3) (Silicibacter pomeroyi).